The following is a 336-amino-acid chain: Phosphate acyltransferase (336 aa).

It belongs to the PlsX family. Homodimer. Probably interacts with PlsY.

The protein localises to the cytoplasm. The enzyme catalyses a fatty acyl-[ACP] + phosphate = an acyl phosphate + holo-[ACP]. Its pathway is lipid metabolism; phospholipid metabolism. In terms of biological role, catalyzes the reversible formation of acyl-phosphate (acyl-PO(4)) from acyl-[acyl-carrier-protein] (acyl-ACP). This enzyme utilizes acyl-ACP as fatty acyl donor, but not acyl-CoA. This chain is Phosphate acyltransferase, found in Pseudomonas putida (strain GB-1).